Reading from the N-terminus, the 46-residue chain is Protein PsbN (46 aa).

Residues 7-27 (ALSVAIGVLAVLLGMTGFGVY) traverse the membrane as a helical segment.

Belongs to the PsbN family.

The protein resides in the cellular thylakoid membrane. Functionally, may play a role in photosystem I and II biogenesis. The protein is Protein PsbN of Parasynechococcus marenigrum (strain WH8102).